We begin with the raw amino-acid sequence, 76 residues long: DNA-binding protein S1FA2 (76 aa).

The Nuclear localization signal motif lies at 50–55; sequence PPRKKK. The segment covering 51–66 has biased composition (basic residues); it reads PRKKKPLSKKKLKREK. Positions 51–76 are disordered; it reads PRKKKPLSKKKLKREKLKQGVPVPGE.

Belongs to the S1FA transcription factor family.

It is found in the nucleus. DNA-binding protein that specifically recognizes a negative element (S1F) within the RPS1 promoter. The chain is DNA-binding protein S1FA2 (S1FA2) from Arabidopsis thaliana (Mouse-ear cress).